A 130-amino-acid polypeptide reads, in one-letter code: uncharacterized protein (130 aa).

Disordered stretches follow at residues 1–47 (MTFY…QSNT) and 78–130 (QTLE…SESS). A compositionally biased stretch (polar residues) spans 13–33 (QWKQLQTQQNKKNSPRPVTSS). A compositionally biased stretch (basic residues) spans 86 to 110 (PSKHKRKRTKYRRTKKSKHHSRKKT). Residues 117–130 (SERDSTTGRESESS) show a composition bias toward basic and acidic residues.

This is an uncharacterized protein from Torque teno mini virus 1 (isolate TLMV-CBD279).